The chain runs to 748 residues: Histone-lysine N-methyltransferase EZH2 (748 aa).

Residues tyrosine 184–aspartate 199 are compositionally biased toward acidic residues. 2 disordered regions span residues tyrosine 184–phenylalanine 220 and alanine 342–proline 428. Over residues aspartate 200–phenylalanine 220 the composition is skewed to basic and acidic residues. Residues threonine 347–arginine 359 are compositionally biased toward basic residues. Polar residues predominate over residues asparagine 362–valine 374. Basic and acidic residues predominate over residues glutamate 376–glycine 387. The 103-residue stretch at cysteine 505–serine 607 folds into the CXC domain. One can recognise an SET domain in the interval lysine 614–arginine 729.

It belongs to the class V-like SAM-binding methyltransferase superfamily. Histone-lysine methyltransferase family. EZ subfamily. In terms of assembly, component of the prc2/eed-ezh2 complex.

Its subcellular location is the nucleus. The catalysed reaction is L-lysyl(27)-[histone H3] + 3 S-adenosyl-L-methionine = N(6),N(6),N(6)-trimethyl-L-lysyl(27)-[histone H3] + 3 S-adenosyl-L-homocysteine + 3 H(+). Functionally, polycomb group (PcG) protein. Catalytic subunit of the prc2/eed-ezh2 complex, which methylates 'Lys-9' and 'Lys-27' of histone H3, leading to transcriptional repression of the affected target gene. May repress transcription of the egr2 and en2 genes. May regulate the circadian clock via histone methylation at the promoter of the circadian genes. In Xenopus laevis (African clawed frog), this protein is Histone-lysine N-methyltransferase EZH2 (ezh2-a).